The primary structure comprises 481 residues: uncharacterized protein (481 aa).

The tract at residues Met1–Ala28 is disordered. One can recognise a TRAM domain in the interval Thr29 to Ser87. Residues Gln313, Tyr342, Asp363, and Asp411 each coordinate S-adenosyl-L-methionine. Cys438 acts as the Nucleophile in catalysis.

The protein belongs to the class I-like SAM-binding methyltransferase superfamily. RNA M5U methyltransferase family.

This is an uncharacterized protein from Lactiplantibacillus plantarum (strain ATCC BAA-793 / NCIMB 8826 / WCFS1) (Lactobacillus plantarum).